A 250-amino-acid polypeptide reads, in one-letter code: Hydroxyacylglutathione hydrolase (250 aa).

Zn(2+)-binding residues include His52, His54, Asp56, His57, His107, Asp128, and His166.

The protein belongs to the metallo-beta-lactamase superfamily. Glyoxalase II family. Monomer. Requires Zn(2+) as cofactor.

It carries out the reaction an S-(2-hydroxyacyl)glutathione + H2O = a 2-hydroxy carboxylate + glutathione + H(+). The protein operates within secondary metabolite metabolism; methylglyoxal degradation; (R)-lactate from methylglyoxal: step 2/2. Thiolesterase that catalyzes the hydrolysis of S-D-lactoyl-glutathione to form glutathione and D-lactic acid. The polypeptide is Hydroxyacylglutathione hydrolase (Neisseria gonorrhoeae (strain NCCP11945)).